Here is a 182-residue protein sequence, read N- to C-terminus: Adenylate kinase (182 aa).

12 to 17 lines the ATP pocket; sequence GAGKGT. The NMP stretch occupies residues 32–61; the sequence is STGELLRKEIEMNTNLGIQVKDIMNRGELV. AMP is bound by residues Thr-33, Arg-38, 59 to 61, 85 to 88, and Gln-92; these read ELV and GYPR. An LID region spans residues 126–132; sequence LRGRKDD. Arg-127 contacts ATP. AMP is bound by residues Arg-129 and Arg-140. Arg-168 is an ATP binding site.

Belongs to the adenylate kinase family. Monomer.

It localises to the cytoplasm. It carries out the reaction AMP + ATP = 2 ADP. It participates in purine metabolism; AMP biosynthesis via salvage pathway; AMP from ADP: step 1/1. Catalyzes the reversible transfer of the terminal phosphate group between ATP and AMP. Plays an important role in cellular energy homeostasis and in adenine nucleotide metabolism. This chain is Adenylate kinase, found in Prochlorococcus marinus (strain AS9601).